A 926-amino-acid chain; its full sequence is ABC transporter A family member 6 (926 aa).

6 consecutive transmembrane segments (helical) span residues L34–S54, A336–L356, F389–L409, T418–V438, V451–I471, and D525–I545. The ABC transporter domain maps to I610 to T847. Residue G648–T655 participates in ATP binding.

The protein belongs to the ABC transporter superfamily. ABCA family. CPR flippase (TC 3.A.1.211) subfamily.

Its subcellular location is the membrane. The protein is ABC transporter A family member 6 (ABCA6) of Arabidopsis thaliana (Mouse-ear cress).